Reading from the N-terminus, the 2603-residue chain is Squalestatin tetraketide synthase (2603 aa).

In terms of domain architecture, Ketosynthase family 3 (KS3) spans 29–455 (TIPIAIIGMS…GANAHVILES (427 aa)). Active-site for beta-ketoacyl synthase activity residues include Cys-202, His-337, and His-377. Residues 463 to 512 (IANGSGRSNGTGNGHNGANGTTNGHNGTNGTTNGHFDATQATNGHYGTDE) are disordered. Positions 469–479 (RSNGTGNGHNG) are enriched in gly residues. A compositionally biased stretch (low complexity) spans 480–497 (ANGTTNGHNGTNGTTNGH). The segment at 608–931 (VFTGQGAQWF…PYISCLLRGQ (324 aa)) is malonyl-CoA:ACP transacylase (MAT) domain. The tract at residues 1000–1138 (HDLLGSLIVG…GRITIEFDTS (139 aa)) is N-terminal hotdog fold. The region spanning 1000–1314 (HDLLGSLIVG…NQSVGQMAPQ (315 aa)) is the PKS/mFAS DH domain. Residues 1000–1314 (HDLLGSLIVG…NQSVGQMAPQ (315 aa)) are dehydratase (DH) domain. Catalysis depends on His-1032, which acts as the Proton acceptor; for dehydratase activity. The tract at residues 1157–1314 (LMRSVDPSNL…NQSVGQMAPQ (158 aa)) is C-terminal hotdog fold. Residue Asp-1223 is the Proton donor; for dehydratase activity of the active site. A methyltransferase (CMet) domain region spans residues 1465 to 1665 (LYRYYTDAIK…GLDIELRDCD (201 aa)). The tract at residues 1892-2205 (GLIDTLQFSK…AGKHMGKIVI (314 aa)) is enoyl reductase (ER) (ER) domain. Positions 2228–2406 (ASYLIVGGLG…AVSIDLGMVQ (179 aa)) are ketoreductase (KR) domain. The Carrier domain maps to 2516–2593 (EAIDVVGRAI…ALATTVATKS (78 aa)). Position 2553 is an O-(pantetheine 4'-phosphoryl)serine (Ser-2553).

It participates in secondary metabolite biosynthesis. Highly reducing polyketide synthase (HR-PKS); part of the gene cluster that mediates the biosynthesis of squalestatin S1 (SQS1, also known as zaragozic acid A), a lead compound for the treatment of hyper-cholesterolemia by targeting squalene synthase (SS). Pks1 is responsible for the biosynthesis of the tetraketide sidechain of SQS1. The biosynthesis must involve 3 rounds of chain extension. After the first and second rounds methyl-transfer occurs, and in all rounds of extension the ketoreductase and dehydratase are active. The enoyl reductase and C-MeT are not active in the final round of extension. The sequence is that of Squalestatin tetraketide synthase from Phoma sp. (strain C2932).